We begin with the raw amino-acid sequence, 372 residues long: 1,3,6,8-tetrahydroxynaphthalene synthase (372 aa).

Residue Cys138 is part of the active site.

Belongs to the thiolase-like superfamily. Chalcone/stilbene synthases family. Homodimer.

The enzyme catalyses 5 malonyl-CoA + 5 H(+) = naphthalene-1,3,6,8-tetrol + 5 CO2 + 5 CoA + H2O. It functions in the pathway pigment biosynthesis; melanin biosynthesis. Involved in the biosynthesis of melanin but also various secondary metabolites containing a naphthoquinone ring. Catalyzes the iterative condensation of five CoA-linked malonyl units to form a pentaketide intermediate. THNS subsequently catalyzes the dual intramolecular Claisen and aldol condensations of this linear intermediate to produce the fused ring of 1,3,6,8-tetrahydroxynaphthalene (THN). In Streptomyces griseus, this protein is 1,3,6,8-tetrahydroxynaphthalene synthase.